The chain runs to 568 residues: Periplasmic trehalase (568 aa).

Positions 1-38 are cleaved as a signal peptide; it reads MPHAPARSGDAMSAAAPPCCTSLLGLSLSMFVAPCALA. Substrate-binding positions include Arg-169, 176–177, Asn-213, 222–224, 294–296, and Gly-327; these read WD, RSQ, and RPE. Residues Asp-329 and Glu-511 each act as proton donor/acceptor in the active site. Glu-526 contacts substrate.

This sequence belongs to the glycosyl hydrolase 37 family.

The protein localises to the periplasm. The enzyme catalyses alpha,alpha-trehalose + H2O = alpha-D-glucose + beta-D-glucose. Functionally, provides the cells with the ability to utilize trehalose at high osmolarity by splitting it into glucose molecules that can subsequently be taken up by the phosphotransferase-mediated uptake system. The protein is Periplasmic trehalase of Xanthomonas campestris pv. campestris (strain B100).